The following is an 883-amino-acid chain: Puromycin-sensitive aminopeptidase (883 aa).

Substrate-binding positions include Glu125 and Gly265–Asn269. His301 lines the Zn(2+) pocket. Glu302 serves as the catalytic Proton acceptor. Residues His305 and Glu324 each contribute to the Zn(2+) site.

The protein belongs to the peptidase M1 family. Requires Zn(2+) as cofactor.

The catalysed reaction is Release of an N-terminal amino acid, preferentially alanine, from a wide range of peptides, amides and arylamides.. Strongly inhibited by puromycin and DAMPAQ-22. Functionally, aminopeptidase with broad substrate specificity for several peptides. Involved in proteolytic events essential for cell growth and viability. Plays an essential role during prophase I of meiosis. Required for correct meiotic reconbination in both male and female gametophytes. This chain is Puromycin-sensitive aminopeptidase (MPA1), found in Arabidopsis thaliana (Mouse-ear cress).